Here is a 176-residue protein sequence, read N- to C-terminus: MSLSVRFAAQCAARQLRASTRASSSLLVQKRFESTAAPAANPKIAAIVDQISTLTLLETSELVSSLKSRLNIPDLPVGGFAAAAPAAAPAAAPAEEEEAAPAAAEKTLFTLKLEKFDAAAKPKVIKEVKNLLGLSLVESKKFVESAPKVMKESVPKEDAEKIVAAMKELGATVTMD.

It belongs to the bacterial ribosomal protein bL12 family. Component of the mitochondrial large ribosomal subunit (mt-LSU). Mature N.crassa 74S mitochondrial ribosomes consist of a small (37S) and a large (54S) subunit. The 37S small subunit contains a 16S ribosomal RNA (16S mt-rRNA) and 32 different proteins. The 54S large subunit contains a 23S rRNA (23S mt-rRNA) and 42 different proteins.

The protein localises to the mitochondrion. Functionally, component of the mitochondrial ribosome (mitoribosome), a dedicated translation machinery responsible for the synthesis of mitochondrial genome-encoded proteins, including at least some of the essential transmembrane subunits of the mitochondrial respiratory chain. The mitoribosomes are attached to the mitochondrial inner membrane and translation products are cotranslationally integrated into the membrane. This is Large ribosomal subunit protein bL12m (mrpl12) from Neurospora crassa (strain ATCC 24698 / 74-OR23-1A / CBS 708.71 / DSM 1257 / FGSC 987).